We begin with the raw amino-acid sequence, 529 residues long: Inosine-5'-monophosphate dehydrogenase (529 aa).

2 CBS domains span residues 129–185 and 189–246; these read MVTD…SKQV and MTKA…PLAT. NAD(+) contacts are provided by residues Asp-283 and 334-336; that span reads GVG. K(+) is bound by residues Gly-336 and Gly-338. An IMP-binding site is contributed by Ser-339. K(+) is bound at residue Cys-341. The active-site Thioimidate intermediate is Cys-341. IMP-binding positions include 374 to 376, 397 to 398, and 421 to 425; these read DGG, GS, and YRGMG. The active-site Proton acceptor is the Arg-443. Position 458 (Glu-458) interacts with IMP. K(+) is bound by residues Glu-511, Ser-512, and His-513.

The protein belongs to the IMPDH/GMPR family. As to quaternary structure, homotetramer. Requires K(+) as cofactor.

The enzyme catalyses IMP + NAD(+) + H2O = XMP + NADH + H(+). It functions in the pathway purine metabolism; XMP biosynthesis via de novo pathway; XMP from IMP: step 1/1. Mycophenolic acid (MPA) is a non-competitive inhibitor that prevents formation of the closed enzyme conformation by binding to the same site as the amobile flap. In contrast, mizoribine monophosphate (MZP) is a competitive inhibitor that induces the closed conformation. MPA is a potent inhibitor of mammalian IMPDHs but a poor inhibitor of the bacterial enzymes. MZP is a more potent inhibitor of bacterial IMPDH. Its function is as follows. Catalyzes the conversion of inosine 5'-phosphate (IMP) to xanthosine 5'-phosphate (XMP), the first committed and rate-limiting step in the de novo synthesis of guanine nucleotides, and therefore plays an important role in the regulation of cell growth. The chain is Inosine-5'-monophosphate dehydrogenase from Mycobacterium bovis (strain ATCC BAA-935 / AF2122/97).